Consider the following 275-residue polypeptide: Membrane protein insertase YidC (275 aa).

The first 22 residues, 1-22, serve as a signal peptide directing secretion; sequence MKKYKRLLLMAGLVTLVFVLSA. Cys-23 is lipidated: N-palmitoyl cysteine. Residue Cys-23 is the site of S-diacylglycerol cysteine attachment. The next 4 helical transmembrane spans lie at 53 to 73, 127 to 147, 169 to 189, and 206 to 226; these read LGGS…IILL, YIGC…YQAI, YLIL…LSSM, and PAMI…YWVV. The span at 249-266 shows a compositional bias: basic and acidic residues; sequence EEAARQAKARERALERAK. Residues 249–275 form a disordered region; sequence EEAARQAKARERALERAKSPKKKGKKK.

This sequence belongs to the OXA1/ALB3/YidC family. Type 2 subfamily.

The protein resides in the cell membrane. Functionally, required for the insertion and/or proper folding and/or complex formation of integral membrane proteins into the membrane. Involved in integration of membrane proteins that insert both dependently and independently of the Sec translocase complex, as well as at least some lipoproteins. This Enterococcus faecalis (strain ATCC 700802 / V583) protein is Membrane protein insertase YidC.